The chain runs to 434 residues: Ribosomal protein uS12 methylthiotransferase RimO (434 aa).

The MTTase N-terminal domain occupies 9–125 (PAIFLLSLGC…VLAAIGAKYR (117 aa)). Residues C18, C54, C88, C149, C153, and C156 each contribute to the [4Fe-4S] cluster site. Residues 135–364 (LTPPHYAFLK…MELQEGISAS (230 aa)) form the Radical SAM core domain. A TRAM domain is found at 367–434 (RKLEGQTLKV…AYELFGRISG (68 aa)).

It belongs to the methylthiotransferase family. RimO subfamily. It depends on [4Fe-4S] cluster as a cofactor.

The protein resides in the cytoplasm. It catalyses the reaction L-aspartate(89)-[ribosomal protein uS12]-hydrogen + (sulfur carrier)-SH + AH2 + 2 S-adenosyl-L-methionine = 3-methylsulfanyl-L-aspartate(89)-[ribosomal protein uS12]-hydrogen + (sulfur carrier)-H + 5'-deoxyadenosine + L-methionine + A + S-adenosyl-L-homocysteine + 2 H(+). In terms of biological role, catalyzes the methylthiolation of an aspartic acid residue of ribosomal protein uS12. The chain is Ribosomal protein uS12 methylthiotransferase RimO from Chlorobaculum tepidum (strain ATCC 49652 / DSM 12025 / NBRC 103806 / TLS) (Chlorobium tepidum).